Reading from the N-terminus, the 217-residue chain is Uracil-DNA glycosylase (217 aa).

D62 (proton acceptor) is an active-site residue.

This sequence belongs to the uracil-DNA glycosylase (UDG) superfamily. UNG family.

The protein localises to the cytoplasm. The enzyme catalyses Hydrolyzes single-stranded DNA or mismatched double-stranded DNA and polynucleotides, releasing free uracil.. Functionally, excises uracil residues from the DNA which can arise as a result of misincorporation of dUMP residues by DNA polymerase or due to deamination of cytosine. This Streptococcus pneumoniae serotype 19F (strain G54) protein is Uracil-DNA glycosylase.